The primary structure comprises 1067 residues: Ubiquitin carboxyl-terminal hydrolase 26 (1067 aa).

Residues 1 to 12 (MSRPNTRNKNKR) are compositionally biased toward basic residues. Residues 1–22 (MSRPNTRNKNKRQRPDAVDSSS) are disordered. Residues 106 to 442 (AGLTNLGATC…DAYMLMYSLR (337 aa)) enclose the USP domain. Catalysis depends on Cys115, which acts as the Nucleophile. His359 functions as the Proton acceptor in the catalytic mechanism. Positions 385 to 418 (KRPCNEASSSTPQSESNGTASSGNITDGIQSGSS) are disordered. The segment covering 390–418 (EASSSTPQSESNGTASSGNITDGIQSGSS) has biased composition (polar residues). DUSP domains lie at 503–595 (NALT…GDYC), 610–711 (DSYR…DCTC), and 738–861 (TLKV…SAFI). Residues 948–1031 (FEVDRRTSKR…LWVRDTEMHE (84 aa)) enclose the Ubiquitin-like domain.

This sequence belongs to the peptidase C19 family. In terms of tissue distribution, expressed in seedlings, roots, stems, leaves and inflorescences.

Its subcellular location is the nucleus. It carries out the reaction Thiol-dependent hydrolysis of ester, thioester, amide, peptide and isopeptide bonds formed by the C-terminal Gly of ubiquitin (a 76-residue protein attached to proteins as an intracellular targeting signal).. Recognizes and hydrolyzes the peptide bond at the C-terminal Gly of ubiquitin. Involved in the processing of poly-ubiquitin precursors as well as that of ubiquitinated proteins. Deubiquitinates H2BK143ub1 of histone H2B. In Arabidopsis thaliana (Mouse-ear cress), this protein is Ubiquitin carboxyl-terminal hydrolase 26 (UBP26).